Here is a 206-residue protein sequence, read N- to C-terminus: dITP/XTP pyrophosphatase (206 aa).

7–12 (SNNAKK) serves as a coordination point for substrate. Residue Asp-72 is the Proton acceptor of the active site. Asp-72 contributes to the Mg(2+) binding site. Substrate contacts are provided by residues Ser-73, 155–158 (FGYD), Lys-182, and 187–188 (HR).

It belongs to the HAM1 NTPase family. As to quaternary structure, homodimer. Mg(2+) is required as a cofactor.

It catalyses the reaction XTP + H2O = XMP + diphosphate + H(+). It carries out the reaction dITP + H2O = dIMP + diphosphate + H(+). The catalysed reaction is ITP + H2O = IMP + diphosphate + H(+). In terms of biological role, pyrophosphatase that catalyzes the hydrolysis of nucleoside triphosphates to their monophosphate derivatives, with a high preference for the non-canonical purine nucleotides XTP (xanthosine triphosphate), dITP (deoxyinosine triphosphate) and ITP. Seems to function as a house-cleaning enzyme that removes non-canonical purine nucleotides from the nucleotide pool, thus preventing their incorporation into DNA/RNA and avoiding chromosomal lesions. This is dITP/XTP pyrophosphatase from Corynebacterium glutamicum (strain ATCC 13032 / DSM 20300 / JCM 1318 / BCRC 11384 / CCUG 27702 / LMG 3730 / NBRC 12168 / NCIMB 10025 / NRRL B-2784 / 534).